Reading from the N-terminus, the 130-residue chain is Ribosome-binding factor A (130 aa).

Belongs to the RbfA family. Monomer. Binds 30S ribosomal subunits, but not 50S ribosomal subunits or 70S ribosomes.

It is found in the cytoplasm. Functionally, one of several proteins that assist in the late maturation steps of the functional core of the 30S ribosomal subunit. Associates with free 30S ribosomal subunits (but not with 30S subunits that are part of 70S ribosomes or polysomes). Required for efficient processing of 16S rRNA. May interact with the 5'-terminal helix region of 16S rRNA. This chain is Ribosome-binding factor A, found in Prochlorococcus marinus (strain MIT 9301).